A 519-amino-acid chain; its full sequence is Cytosol aminopeptidase (519 aa).

Phosphoserine is present on Ser-42. Lys-45 is modified (N6-succinyllysine). Ser-54 is modified (phosphoserine). N6-succinyllysine is present on residues Lys-61 and Lys-103. Phosphoserine is present on residues Ser-180 and Ser-194. Leu-202, Met-203, and Thr-205 together coordinate Zn(2+). Position 238 is a phosphoserine (Ser-238). Residues Lys-282 and Asp-287 each coordinate Zn(2+). Substrate is bound by residues Lys-282, Asp-287, Ser-292, and Lys-294. Mg(2+) is bound at residue Asp-287. Lys-294 is an active-site residue. Residues Arg-303, Asp-305, Asp-364, and Glu-366 each coordinate Zn(2+). Residues Asp-305 and Asp-364 each contribute to the substrate site. Mg(2+) is bound by residues Asp-364 and Glu-366. Residue Arg-368 is part of the active site. Residue Lys-455 is modified to N6-acetyllysine; alternate. An N6-succinyllysine; alternate modification is found at Lys-455. An N6-succinyllysine modification is found at Lys-476. Lys-489 is subject to N6-acetyllysine; alternate. N6-succinyllysine; alternate is present on Lys-489.

This sequence belongs to the peptidase M17 family. Homohexamer. The cofactor is Zn(2+). It depends on Mn(2+) as a cofactor.

Its subcellular location is the cytoplasm. It catalyses the reaction Release of an N-terminal amino acid, Xaa-|-Yaa-, in which Xaa is preferably Leu, but may be other amino acids including Pro although not Arg or Lys, and Yaa may be Pro. Amino acid amides and methyl esters are also readily hydrolyzed, but rates on arylamides are exceedingly low.. The enzyme catalyses an S-substituted L-cysteinylglycine + H2O = an S-substituted L-cysteine + glycine. The catalysed reaction is L-cysteinylglycine + H2O = L-cysteine + glycine. It carries out the reaction S-benzyl-L-cysteinylglycine + H2O = S-benzyl-L-cysteine + glycine. It catalyses the reaction Release of N-terminal proline from a peptide.. Zofenoprilat inhibits Cys-Gly hydrolysis activity. Its function is as follows. Cytosolic metallopeptidase that catalyzes the removal of unsubstituted N-terminal hydrophobic amino acids from various peptides. The presence of Zn(2+) ions is essential for the peptidase activity, and the association with other cofactors can modulate the substrate spectificity of the enzyme. For instance, in the presence of Mn(2+), it displays a specific Cys-Gly hydrolyzing activity of Cys-Gly-S-conjugates. Involved in the metabolism of glutathione and in the degradation of glutathione S-conjugates, which may play a role in the control of the cell redox status. In Bos taurus (Bovine), this protein is Cytosol aminopeptidase.